The primary structure comprises 109 residues: Ribonuclease P protein component (109 aa).

It belongs to the RnpA family. As to quaternary structure, consists of a catalytic RNA component (M1 or rnpB) and a protein subunit.

It catalyses the reaction Endonucleolytic cleavage of RNA, removing 5'-extranucleotides from tRNA precursor.. RNaseP catalyzes the removal of the 5'-leader sequence from pre-tRNA to produce the mature 5'-terminus. It can also cleave other RNA substrates such as 4.5S RNA. The protein component plays an auxiliary but essential role in vivo by binding to the 5'-leader sequence and broadening the substrate specificity of the ribozyme. The chain is Ribonuclease P protein component from Nitratiruptor sp. (strain SB155-2).